The sequence spans 184 residues: H(2)/formate:CoB-CoM heterodisulfide,ferredoxin reductase subunit C2 (184 aa).

2 consecutive 4Fe-4S ferredoxin-type domains span residues 24 to 54 (GEKE…AYRT) and 65 to 97 (IDSV…TEII). [4Fe-4S] cluster is bound by residues cysteine 34, cysteine 37, cysteine 40, cysteine 44, cysteine 77, cysteine 80, cysteine 83, and cysteine 87.

The protein belongs to the HdrC family. As to quaternary structure, the heterodisulfide reductase is composed of three subunits; HdrA, HdrB and HdrC. B1 and B2 subunits are interchangeable, as are the C1 and C2 subunits. The heterodisulfide reductase forms a supercomplex with formylmethanofuran dehydrogenase (Fwd), F(420)-non-reducing hydrogenase (Vhu) and formate dehydrogenase (Fdh). Requires [4Fe-4S] cluster as cofactor.

The catalysed reaction is coenzyme B + coenzyme M + 2 reduced [2Fe-2S]-[ferredoxin] + 2 H(+) = coenzyme M-coenzyme B heterodisulfide + 2 H2 + 2 oxidized [2Fe-2S]-[ferredoxin]. It carries out the reaction coenzyme B + coenzyme M + 2 reduced [2Fe-2S]-[ferredoxin] + 2 CO2 = coenzyme M-coenzyme B heterodisulfide + 2 formate + 2 oxidized [2Fe-2S]-[ferredoxin]. It participates in cofactor metabolism; coenzyme M-coenzyme B heterodisulfide reduction; coenzyme B and coenzyme M from coenzyme M-coenzyme B heterodisulfide: step 1/1. In terms of biological role, part of a complex that catalyzes the reversible reduction of CoM-S-S-CoB to the thiol-coenzymes H-S-CoM (coenzyme M) and H-S-CoB (coenzyme B). This chain is H(2)/formate:CoB-CoM heterodisulfide,ferredoxin reductase subunit C2, found in Methanococcus maripaludis (strain DSM 14266 / JCM 13030 / NBRC 101832 / S2 / LL).